The primary structure comprises 471 residues: Microtubule-associated tyrosine carboxypeptidase 1 (471 aa).

Disordered regions lie at residues 1-40 (MVLD…PLYP) and 76-116 (HMRR…LRPA). H280 contacts Zn(2+). E281 acts as the Nucleophile in catalysis. Zn(2+) contacts are provided by H285 and E316.

It belongs to the peptidase MATCAP family. Requires Zn(2+) as cofactor.

It localises to the cytoplasm. The protein resides in the cytoskeleton. It catalyses the reaction C-terminal L-alpha-aminoacyl-L-glutamyl-L-glutamyl-L-tyrosyl-[tubulin] + H2O = C-terminal L-alpha-aminoacyl-L-glutamyl-L-glutamyl-[tubulin] + L-tyrosine. It carries out the reaction C-terminal L-alpha-aminoacyl-L-glutamyl-L-glutamyl-L-phenylalanyl-[tubulin] + H2O = C-terminal L-alpha-aminoacyl-L-glutamyl-L-glutamyl-[tubulin] + L-phenylalanine. In terms of biological role, tyrosine carboxypeptidase that removes the C-terminal tyrosine residue of alpha-tubulin, thereby regulating microtubule dynamics and function. Also able to remove the C-terminal phenylalanine residue of alpha-tubulin TUBA8. Recognizes adjacent tubulin dimers along the same protofilament. The sequence is that of Microtubule-associated tyrosine carboxypeptidase 1 from Homo sapiens (Human).